We begin with the raw amino-acid sequence, 329 residues long: DNA-directed RNA polymerase subunit alpha (329 aa).

The alpha N-terminal domain (alpha-NTD) stretch occupies residues 1–235 (MQGSVIEFLK…EQLDAFVDLR (235 aa)). The interval 249–329 (FDPILLRPVD…NWPPASIAED (81 aa)) is alpha C-terminal domain (alpha-CTD).

This sequence belongs to the RNA polymerase alpha chain family. As to quaternary structure, homodimer. The RNAP catalytic core consists of 2 alpha, 1 beta, 1 beta' and 1 omega subunit. When a sigma factor is associated with the core the holoenzyme is formed, which can initiate transcription.

The enzyme catalyses RNA(n) + a ribonucleoside 5'-triphosphate = RNA(n+1) + diphosphate. In terms of biological role, DNA-dependent RNA polymerase catalyzes the transcription of DNA into RNA using the four ribonucleoside triphosphates as substrates. This is DNA-directed RNA polymerase subunit alpha from Haemophilus ducreyi (strain 35000HP / ATCC 700724).